A 111-amino-acid polypeptide reads, in one-letter code: Ribonuclease P protein component (111 aa).

Belongs to the RnpA family. Consists of a catalytic RNA component (M1 or rnpB) and a protein subunit.

It carries out the reaction Endonucleolytic cleavage of RNA, removing 5'-extranucleotides from tRNA precursor.. Functionally, RNaseP catalyzes the removal of the 5'-leader sequence from pre-tRNA to produce the mature 5'-terminus. It can also cleave other RNA substrates such as 4.5S RNA. The protein component plays an auxiliary but essential role in vivo by binding to the 5'-leader sequence and broadening the substrate specificity of the ribozyme. In Fusobacterium nucleatum subsp. nucleatum (strain ATCC 25586 / DSM 15643 / BCRC 10681 / CIP 101130 / JCM 8532 / KCTC 2640 / LMG 13131 / VPI 4355), this protein is Ribonuclease P protein component.